The primary structure comprises 201 residues: Small ribosomal subunit protein uS4 (201 aa).

The S4 RNA-binding domain occupies alanine 91–aspartate 151.

The protein belongs to the universal ribosomal protein uS4 family. Part of the 30S ribosomal subunit. Contacts protein S5. The interaction surface between S4 and S5 is involved in control of translational fidelity.

Functionally, one of the primary rRNA binding proteins, it binds directly to 16S rRNA where it nucleates assembly of the body of the 30S subunit. In terms of biological role, with S5 and S12 plays an important role in translational accuracy. In Corynebacterium urealyticum (strain ATCC 43042 / DSM 7109), this protein is Small ribosomal subunit protein uS4.